Reading from the N-terminus, the 367-residue chain is uncharacterized protein (367 aa).

The next 4 helical transmembrane spans lie at 35–55 (YVYD…IILW), 61–81 (LALF…TLLV), 92–112 (EVAD…TAAG), and 113–133 (LMFS…PLFL). 3 disordered regions span residues 177–220 (KLPK…PASI), 249–283 (SNIK…YYTP), and 296–367 (GDIS…SRPK). Residues 257-274 (NTKSILHTPLNRRSPSGS) are compositionally biased toward polar residues. Over residues 302–312 (SSSSTSSKTST) the composition is skewed to low complexity. A compositionally biased stretch (basic and acidic residues) spans 323–342 (SRSERNARHHRNKEDHRQNQ). Residues 357 to 367 (PRRKKYRSRPK) show a composition bias toward basic residues.

Belongs to the chlamydial CPn_0443/CT_005/TC_0273 family.

The protein resides in the cell membrane. This is an uncharacterized protein from Chlamydia muridarum (strain MoPn / Nigg).